Reading from the N-terminus, the 541-residue chain is Histone acetyltransferase ESA1 (541 aa).

Residues 1–11 are compositionally biased toward basic and acidic residues; sequence MAVAEIKKEKG. The tract at residues 1-31 is disordered; sequence MAVAEIKKEKGSSLSPEPSSPIQILSTEPDA. The span at 12-30 shows a compositional bias: polar residues; the sequence is SSLSPEPSSPIQILSTEPD. One can recognise a Tudor-knot domain in the interval 47–97; it reads PGCKVHVSKDGEFRLAEILQEHIKKGRKVFYVHYQDFNKRLDEWIELDRID. A disordered region spans residues 111–154; sequence TKENKSKKKSKSKGQTKLSKNNTTANSTTGTPQPSDGQPIMGDD. The span at 115 to 124 shows a compositional bias: basic residues; the sequence is KSKKKSKSKG. Residues 131–146 are compositionally biased toward polar residues; sequence NNTTANSTTGTPQPSD. The 334-residue stretch at 196 to 529 folds into the MYST-type HAT domain; it reads ARVRNLSTII…LNPKLLHWTP (334 aa). The C2HC MYST-type; degenerate zinc finger occupies 229–254; sequence IYICDFTLSYFGSKKQFERFRSKCSM. The ESA1-RPD3 motif signature appears at 279–300; it reads RTWCRNLCLLSKLFLDHKTLYY. N6-acetyllysine; by autocatalysis is present on Lys296. Acetyl-CoA-binding positions include 337 to 341 and 346 to 352; these read ACILT and QKRGFGK. Glu372 functions as the Proton donor/acceptor in the catalytic mechanism. Position 376 (Ser376) interacts with acetyl-CoA. The disordered stretch occupies residues 413–438; it reads YDEAENGKDSSATPTPGPGSNASQSS.

The protein belongs to the MYST (SAS/MOZ) family. As to quaternary structure, component of the NuA4 histone acetyltransferase complex. In terms of processing, autoacetylation at Lys-296 is required for proper function.

Its subcellular location is the nucleus. The protein localises to the chromosome. It catalyses the reaction L-lysyl-[histone] + acetyl-CoA = N(6)-acetyl-L-lysyl-[histone] + CoA + H(+). The enzyme catalyses L-lysyl-[protein] + acetyl-CoA = N(6)-acetyl-L-lysyl-[protein] + CoA + H(+). It carries out the reaction 2-hydroxyisobutanoyl-CoA + L-lysyl-[protein] = N(6)-(2-hydroxyisobutanoyl)-L-lysyl-[protein] + CoA + H(+). The catalysed reaction is (2E)-butenoyl-CoA + L-lysyl-[protein] = N(6)-(2E)-butenoyl-L-lysyl-[protein] + CoA + H(+). Functionally, catalytic component of the NuA4 histone acetyltransferase (HAT) complex which is involved in epigenetic transcriptional activation of selected genes principally by acetylation of nucleosomal histones H4, H3, H2B, H2A and H2A variant H2A.Z. Acetylates histone H4 to form H4K5ac, H4K8ac, H4K12ac and H4K16ac, histone H3 to form H3K14ac, and histone H2A to form H2AK4ac and H2AK7ac. The NuA4 complex is involved in the DNA damage response and is required for chromosome segregation. The NuA4 complex plays a direct role in repair of DNA double-strand breaks (DSBs) through homologous recombination. Recruitment to promoters depends on H3K4me. Also acetylates non-histone proteins. In addition to protein acetyltransferase, can use different acyl-CoA substrates, such as 2-hydroxyisobutanoyl-CoA (2-hydroxyisobutyryl-CoA) or (2E)-butenoyl-CoA (crotonyl-CoA), and is able to mediate protein 2-hydroxyisobutyrylation and crotonylation, respectively. The chain is Histone acetyltransferase ESA1 (ESA1) from Candida albicans (strain SC5314 / ATCC MYA-2876) (Yeast).